The chain runs to 49 residues: Large ribosomal subunit protein bL33 (49 aa).

It belongs to the bacterial ribosomal protein bL33 family.

The chain is Large ribosomal subunit protein bL33 from Leuconostoc citreum (strain KM20).